Reading from the N-terminus, the 162-residue chain is N5-carboxyaminoimidazole ribonucleotide mutase (162 aa).

Residues Ser-11, Asp-14, and Arg-41 each coordinate substrate.

The protein belongs to the AIR carboxylase family. Class I subfamily.

It carries out the reaction 5-carboxyamino-1-(5-phospho-D-ribosyl)imidazole + H(+) = 5-amino-1-(5-phospho-D-ribosyl)imidazole-4-carboxylate. The protein operates within purine metabolism; IMP biosynthesis via de novo pathway; 5-amino-1-(5-phospho-D-ribosyl)imidazole-4-carboxylate from 5-amino-1-(5-phospho-D-ribosyl)imidazole (N5-CAIR route): step 2/2. Functionally, catalyzes the conversion of N5-carboxyaminoimidazole ribonucleotide (N5-CAIR) to 4-carboxy-5-aminoimidazole ribonucleotide (CAIR). This chain is N5-carboxyaminoimidazole ribonucleotide mutase, found in Bacillus subtilis (strain 168).